A 152-amino-acid chain; its full sequence is 6,7-dimethyl-8-ribityllumazine synthase (152 aa).

Residues phenylalanine 24, 56–58 (SFE), and 80–82 (VVV) each bind 5-amino-6-(D-ribitylamino)uracil. 85-86 (ET) contacts (2S)-2-hydroxy-3-oxobutyl phosphate. Histidine 88 functions as the Proton donor in the catalytic mechanism. Residue phenylalanine 113 coordinates 5-amino-6-(D-ribitylamino)uracil. Residue arginine 127 participates in (2S)-2-hydroxy-3-oxobutyl phosphate binding.

This sequence belongs to the DMRL synthase family.

The catalysed reaction is (2S)-2-hydroxy-3-oxobutyl phosphate + 5-amino-6-(D-ribitylamino)uracil = 6,7-dimethyl-8-(1-D-ribityl)lumazine + phosphate + 2 H2O + H(+). Its pathway is cofactor biosynthesis; riboflavin biosynthesis; riboflavin from 2-hydroxy-3-oxobutyl phosphate and 5-amino-6-(D-ribitylamino)uracil: step 1/2. Catalyzes the formation of 6,7-dimethyl-8-ribityllumazine by condensation of 5-amino-6-(D-ribitylamino)uracil with 3,4-dihydroxy-2-butanone 4-phosphate. This is the penultimate step in the biosynthesis of riboflavin. This is 6,7-dimethyl-8-ribityllumazine synthase from Thermococcus onnurineus (strain NA1).